Reading from the N-terminus, the 251-residue chain is Phosphate import ATP-binding protein PstB 2 (251 aa).

Positions 6 to 246 constitute an ABC transporter domain; it reads FNIENLDLFY…PRDDRTRGYV (241 aa). An ATP-binding site is contributed by 38-45; that stretch reads GPSGCGKS.

The protein belongs to the ABC transporter superfamily. Phosphate importer (TC 3.A.1.7) family. In terms of assembly, the complex is composed of two ATP-binding proteins (PstB), two transmembrane proteins (PstC and PstA) and a solute-binding protein (PstS).

It localises to the cell inner membrane. It carries out the reaction phosphate(out) + ATP + H2O = ADP + 2 phosphate(in) + H(+). In terms of biological role, part of the ABC transporter complex PstSACB involved in phosphate import. Responsible for energy coupling to the transport system. This is Phosphate import ATP-binding protein PstB 2 from Vibrio cholerae serotype O1 (strain ATCC 39315 / El Tor Inaba N16961).